The chain runs to 442 residues: UDP-glycosyltransferase 79B8 (442 aa).

Residues S260, 319-321, 336-344, and 358-361 each bind UDP-alpha-D-glucose; these read VQQ, HCGPGTIWE, and LGDQ.

The protein belongs to the UDP-glycosyltransferase family.

The protein is UDP-glycosyltransferase 79B8 (UGT79B8) of Arabidopsis thaliana (Mouse-ear cress).